A 272-amino-acid polypeptide reads, in one-letter code: PHD finger protein ALFIN-LIKE 6 (272 aa).

Positions 1–23 (MEGGGGGGGGGGGGGGGGGGGGA) are enriched in gly residues. Disordered regions lie at residues 1-24 (MEGGGGGGGGGGGGGGGGGGGGAP) and 162-218 (QAKE…DNTL). Residues 168-182 (PNSSSKSNKPSSKVQ) are compositionally biased toward low complexity. Residues 183–200 (SKAESRSKSKLSAPKDEE) show a composition bias toward basic and acidic residues. Positions 201–214 (GSGDDEGEEEEDDH) are enriched in acidic residues. Residues 216 to 268 (NTLCGTCGTNDGKDEFWICCDNCEKWYHGKCVKITPARAEHIKQYKCPDCTNK) form a PHD-type zinc finger.

The protein belongs to the Alfin family.

The protein resides in the nucleus. Its function is as follows. Histone-binding component that specifically recognizes H3 tails trimethylated on 'Lys-4' (H3K4me3), which mark transcription start sites of virtually all active genes. The polypeptide is PHD finger protein ALFIN-LIKE 6 (Oryza sativa subsp. japonica (Rice)).